The primary structure comprises 503 residues: MARKPDISAVPVESAACQGPDPRRWWGLVVILAAQLLVVLDGTVVNIALPSVQRDLGMSDTSRQWVITAYTLAFGGLLLLGGRVADAFGRRRIFAVGILGFGLASLLGGAAPDPGTLFLARALQGVFAAALAPAALALINTLFTEPGERGKAFGVYGAVSGGGAAVGLLAGGLLTEYLDWRWCLYVNAPVALLALLGCRLLPRDRRTGRAVRLDLPGTLLGCGGLVAIVYAFAEAESGWGDPLVVRLLVLGVLMLVAFALVERRVQDPLLPPGVVAHRVRGGSFLVVGLPQIGLFGLFLFLTYYLQGILDYSPVLTGVAFLPLGLGIAVGSSLIAARLLPRTRPRTLIVGALLAAAAGMALLTRLEPDTPQVYLTHLLPAQILIGLGIGCMMMPAMHTATARVAPHEAGAAAAVVNSAQQVGGALGVALLNTVSTGATAAYLADHGTSPAATVDGTVHGYTVAIAFAVGVLLLTAVLAWVLIDSRTEAADETGSASVTPARPR.

Residues methionine 1–arginine 24 are Cytoplasmic-facing. The helical transmembrane segment at tryptophan 25 to valine 45 threads the bilayer. Residues asparagine 46–glutamine 64 lie on the Extracellular side of the membrane. A helical membrane pass occupies residues tryptophan 65–alanine 85. The Cytoplasmic portion of the chain corresponds to aspartate 86 to arginine 92. Residues isoleucine 93–aspartate 113 form a helical membrane-spanning segment. Residues proline 114–alanine 122 are Extracellular-facing. The chain crosses the membrane as a helical span at residues leucine 123–phenylalanine 143. The Cytoplasmic portion of the chain corresponds to threonine 144 to alanine 152. Residues phenylalanine 153 to leucine 173 traverse the membrane as a helical segment. At leucine 174–arginine 181 the chain is on the extracellular side. The helical transmembrane segment at tryptophan 182–proline 202 threads the bilayer. Topologically, residues arginine 203–arginine 212 are cytoplasmic. A helical membrane pass occupies residues leucine 213–alanine 233. The Extracellular portion of the chain corresponds to glutamate 234–aspartate 241. The helical transmembrane segment at proline 242–glutamate 262 threads the bilayer. Topologically, residues arginine 263–arginine 280 are cytoplasmic. Residues glycine 281 to leucine 301 traverse the membrane as a helical segment. Topologically, residues threonine 302–proline 313 are extracellular. The helical transmembrane segment at valine 314–isoleucine 334 threads the bilayer. The Cytoplasmic portion of the chain corresponds to alanine 335–threonine 346. Residues leucine 347–proline 367 form a helical membrane-spanning segment. The Extracellular portion of the chain corresponds to aspartate 368–glutamine 371. A helical transmembrane segment spans residues valine 372–methionine 392. Over methionine 393–glycine 422 the chain is Cytoplasmic. Residues glycine 423–alanine 443 traverse the membrane as a helical segment. Topologically, residues aspartate 444 to threonine 461 are extracellular. The chain crosses the membrane as a helical span at residues valine 462–isoleucine 482. The Cytoplasmic portion of the chain corresponds to aspartate 483–arginine 503.

Belongs to the major facilitator superfamily. EmrB family.

The protein resides in the cell membrane. Functionally, may be involved in active puromycin efflux energized by a proton-dependent electrochemical gradient. In addition, it could be implicated in secreting N-acetylpuromycin, the last intermediate of the puromycin biosynthesis pathway, to the environment. This is Puromycin resistance protein pur8 (pur8) from Streptomyces alboniger.